A 162-amino-acid chain; its full sequence is Translocator protein 2 (162 aa).

The next 5 membrane-spanning stretches (helical) occupy residues 3–23, 44–64, 79–99, 103–123, and 129–149; these read LQGP…CMLI, VILL…YLVW, LGLY…FLAA, GLAL…VFIW, and LAAL…AITY.

Belongs to the TspO/BZRP family. In terms of assembly, homotetramer. May also form homodimer. In terms of tissue distribution, expressed in liver, bone marrow and spleen. In spleen, detected in red pulp but not in white pulp.

The protein localises to the endoplasmic reticulum membrane. It localises to the cell membrane. In terms of biological role, cholesterol-binding protein involved in the redistribution of cholesterol from lipid droplets to the endoplasmic reticulum. Required to meet cholesterol demands during erythropoietic differentiation. May play a role in transport processes at the plasma membrane of erythrocytes, including regulating VDAC-mediated ATP export, and import of the heme precursors protoporphyrin IX and 5-aminolevulinic acid. The chain is Translocator protein 2 (Tspo2) from Mus musculus (Mouse).